The following is a 416-amino-acid chain: Leu/Ile/Val-binding protein homolog 4 (416 aa).

Positions 1 to 26 are cleaved as a signal peptide; that stretch reads MSLKVFLQAGVACAALSLAGAAGASA.

It belongs to the leucine-binding protein family.

Functionally, component of an amino-acid transport system. The sequence is that of Leu/Ile/Val-binding protein homolog 4 from Brucella abortus (strain 2308).